Consider the following 238-residue polypeptide: Small ribosomal subunit protein eS4 (238 aa).

The region spanning 38-100 (LPLAIVIRDV…TGEVYRVVPD (63 aa)) is the S4 RNA-binding domain.

The protein belongs to the eukaryotic ribosomal protein eS4 family.

The protein is Small ribosomal subunit protein eS4 of Pyrobaculum arsenaticum (strain DSM 13514 / JCM 11321 / PZ6).